Consider the following 306-residue polypeptide: D-alanine--D-alanine ligase (306 aa).

The ATP-grasp domain maps to 107–300 (KAAYRTAGLP…FGQLCAWLVE (194 aa)). ATP is bound at residue 134-184 (IAPPYVVKPNNEGSSVGIYIVHEATNSPPQLSEEMPAQVMVEAYAPGREMT). Residues Asp251, Glu267, and Asn269 each coordinate Mg(2+).

Belongs to the D-alanine--D-alanine ligase family. Mg(2+) serves as cofactor. The cofactor is Mn(2+).

Its subcellular location is the cytoplasm. The catalysed reaction is 2 D-alanine + ATP = D-alanyl-D-alanine + ADP + phosphate + H(+). It functions in the pathway cell wall biogenesis; peptidoglycan biosynthesis. Its function is as follows. Cell wall formation. This chain is D-alanine--D-alanine ligase, found in Ruegeria sp. (strain TM1040) (Silicibacter sp.).